The chain runs to 296 residues: tRNA uridine(34) hydroxylase (296 aa).

One can recognise a Rhodanese domain in the interval 130–225 (RGDDVVFFDG…YGEAYGNDGY (96 aa)). The active-site Cysteine persulfide intermediate is the cysteine 185.

This sequence belongs to the TrhO family.

The enzyme catalyses uridine(34) in tRNA + AH2 + O2 = 5-hydroxyuridine(34) in tRNA + A + H2O. Catalyzes oxygen-dependent 5-hydroxyuridine (ho5U) modification at position 34 in tRNAs. This chain is tRNA uridine(34) hydroxylase, found in Corynebacterium kroppenstedtii (strain DSM 44385 / JCM 11950 / CIP 105744 / CCUG 35717).